The following is a 375-amino-acid chain: Succinyl-diaminopimelate desuccinylase (375 aa).

His-66 provides a ligand contact to Zn(2+). Residue Asp-68 is part of the active site. Asp-99 contacts Zn(2+). Catalysis depends on Glu-130, which acts as the Proton acceptor. Zn(2+) is bound by residues Glu-131, Glu-159, and His-345.

It belongs to the peptidase M20A family. DapE subfamily. As to quaternary structure, homodimer. Zn(2+) is required as a cofactor. Requires Co(2+) as cofactor.

The enzyme catalyses N-succinyl-(2S,6S)-2,6-diaminopimelate + H2O = (2S,6S)-2,6-diaminopimelate + succinate. It functions in the pathway amino-acid biosynthesis; L-lysine biosynthesis via DAP pathway; LL-2,6-diaminopimelate from (S)-tetrahydrodipicolinate (succinylase route): step 3/3. Catalyzes the hydrolysis of N-succinyl-L,L-diaminopimelic acid (SDAP), forming succinate and LL-2,6-diaminopimelate (DAP), an intermediate involved in the bacterial biosynthesis of lysine and meso-diaminopimelic acid, an essential component of bacterial cell walls. This chain is Succinyl-diaminopimelate desuccinylase, found in Xanthobacter autotrophicus (strain ATCC BAA-1158 / Py2).